The primary structure comprises 40 residues: Potassium channel toxin alpha-KTx 12.3 (40 aa).

Disulfide bonds link cysteine 2–cysteine 5, cysteine 10–cysteine 31, cysteine 16–cysteine 36, and cysteine 20–cysteine 38.

In terms of tissue distribution, expressed by the venom gland.

It localises to the secreted. Its function is as follows. Inhibits high conductance calcium-activated potassium channels (KCNMA). Inhibits Shaker B potassium channels. In Tityus costatus (Brazilian scorpion), this protein is Potassium channel toxin alpha-KTx 12.3.